Reading from the N-terminus, the 254-residue chain is DNA-3-methyladenine glycosylase (254 aa).

The span at 1–10 shows a compositional bias: basic residues; the sequence is MKTPARRSKR. The interval 1 to 20 is disordered; the sequence is MKTPARRSKRVNQEESETNV.

This sequence belongs to the DNA glycosylase MPG family.

The protein resides in the nucleus. It catalyses the reaction Hydrolysis of alkylated DNA, releasing 3-methyladenine, 3-methylguanine, 7-methylguanine and 7-methyladenine.. Functionally, hydrolysis of the deoxyribose N-glycosidic bond to excise 3-methyladenine, and 7-methylguanine from the damaged DNA polymer formed by alkylation lesions. The protein is DNA-3-methyladenine glycosylase (MAG) of Arabidopsis thaliana (Mouse-ear cress).